A 130-amino-acid polypeptide reads, in one-letter code: Large-conductance mechanosensitive channel (130 aa).

At 1-14 (MWNEFKAFAMRGNI) the chain is on the cytoplasmic side. A helical transmembrane segment spans residues 15 to 43 (VDLAIGVVIGGAFGKIVTSLVNDIIMPLV). Residues 44-65 (GLLLGGLDFSGLSFTFGDAVVK) lie on the Extracellular side of the membrane. Residues 66–85 (YGSFIQTIVNFLIISFSIFI) traverse the membrane as a helical segment. At 86–130 (VIRTLNGLRRKKEAEEEAAEEAVDAQEELLKEIRDLLKQQAKSPE) the chain is on the cytoplasmic side.

It belongs to the MscL family. Homopentamer.

It is found in the cell membrane. Channel that opens in response to stretch forces in the membrane lipid bilayer. Forms a nonselective ion channel with a conductance of about 4 nanosiemens. May participate in the regulation of osmotic pressure changes within the cell. The polypeptide is Large-conductance mechanosensitive channel (Bacillus subtilis (strain 168)).